A 555-amino-acid chain; its full sequence is Disabled homolog 1 (555 aa).

The segment at 1 to 26 (MSTETELQVAVKTSAKKDSRKKGQDR) is disordered. Residues 15–26 (AKKDSRKKGQDR) are compositionally biased toward basic and acidic residues. The PID domain occupies 36–189 (KGEGVRYKAK…CEQAVYQTIL (154 aa)). Tyr-198, Tyr-220, and Tyr-232 each carry phosphotyrosine. Disordered regions lie at residues 386–409 (PLAT…PRQK) and 469–555 (LTPV…QDGS). Polar residues predominate over residues 391-403 (PGTNDSARSSPQS). Low complexity-rich tracts occupy residues 470 to 479 (TPVTSTTPST) and 490 to 501 (SSPSKSSASHVS). At Ser-491 the chain carries Phosphoserine; by CDK5. A compositionally biased stretch (acidic residues) spans 504–513 (TADDIFEEGF).

As to quaternary structure, associates with the SH2 domains of SRC, FYN and ABL. Interacts (phosphorylated on tyrosine residues) with CRK and CRKL (via respective SH2 domain). Interacts with SIAH1, LRP8 and VLDLR. Interacts with LRP1. Interacts with APLP1 (via NPXY motif). Interacts with DAB2IP. Interacts with ZSWIM8. Post-translationally, phosphorylated by FYN on Tyr-198 and Tyr-220 upon reelin induction in embryonic neurons. Also phosphorylated on Ser-491 independently of reelin signaling. In terms of processing, ubiquitinated by various cullin-5-RING E3 ubiquitin-protein ligase complexes (ECS complexes) following ligand-binding and phosphorylation, leading to its degradation. Ubiquitinated by the ECS(SOCS7) complex in the cortical plate of the developing cerebral cortex following ligand-binding and phosphorylation by FYN, leading to its degradation by the proteasome. Recognized by ZSWIM8 through a disorder targets misorder mechanism that eliminates misfolded DAB1 via ubiquitination and proteasomal degradation.

Its subcellular location is the cytoplasm. Functionally, signaling adapter of the reelin-mediated signaling pathway, which regulates the migration and differentiation of postmitotic neurons during brain development. Mediates intracellular transduction of Reelin signaling following reelin (RELN)-binding to its receptor: acts by docking proteins through its phosphotyrosine residues and PID domain. The polypeptide is Disabled homolog 1 (Dab1) (Rattus norvegicus (Rat)).